The sequence spans 48 residues: Delta-stichotoxin-Hcr1a (48 aa).

Disulfide bonds link Cys3–Cys43, Cys5–Cys33, and Cys26–Cys44. Lys48 is subject to Lysine amide; partial; in Delta-stichotoxin-Hcr1f.

The protein belongs to the sea anemone sodium channel inhibitory toxin family. Type II subfamily. As to quaternary structure, probably composed of two peptide chains of 12 and 35 residues connected by two disulfide bonds (Cys-3-Cys-43 and Cys-5-Cys-33). Post-translationally, delta-SHTX-Hcr1f (RTX-VI) may be the result of post-translational modification of delta-SHTX-Hcr1a (RTX-III), which would consist of Arg-13 cleavage.

The protein localises to the secreted. It is found in the nematocyst. Functionally, binds to site 3 of voltage-gated sodium channels and inhibits the inactivation process. Specifically inhibits mammalian Nav1.3/SCN3A and Nav1.6/SCN8A sodium channels, as well as insect BgNav1 and VdNav1 sodium channels. Binds to site 3 of voltage-gated sodium channels and inhibits the inactivation process. Specifically inhibits mammalian Nav1.2/SCN3A (low inhibition) and Nav1.6/SCN8A sodium channels, as well as insect BgNav1 and VdNav1 sodium channels. The protein is Delta-stichotoxin-Hcr1a of Radianthus crispa (Leathery sea anemone).